We begin with the raw amino-acid sequence, 303 residues long: Cyclin-dependent kinase 4 (303 aa).

An N-acetylalanine modification is found at Ala2. One can recognise a Protein kinase domain in the interval 6-295 (YEPVAEIGVG…AFRALQHSYL (290 aa)). Residues 12–20 (IGVGAYGTV) and Lys35 each bind ATP. Positions 50–56 (PISTVRE) are required for binding D-type cyclins. Asp140 functions as the Proton acceptor in the catalytic mechanism. A Phosphothreonine; by CAK modification is found at Thr172.

The protein belongs to the protein kinase superfamily. CMGC Ser/Thr protein kinase family. CDC2/CDKX subfamily. In terms of assembly, component of the D-CDK4 complex, composed of CDK4 and some D-type G1 cyclin (CCND1, CCND2 or CCND3). Interacts directly in the complex with CCND1, CCND2 or CCND3. Interacts with SEI1 and ZNF655. Forms a ternary complex, cyclin D-CDK4-CDKN1B, involved in modulating CDK4 enzymatic activity. Interacts directly with CDKN1B (phosphorylated on 'Tyr-88' and 'Tyr-89'); the interaction allows assembly of the cyclin D-CDK4 complex, Thr-172 phosphorylation, nuclear translocation and enhances the cyclin D-CDK4 complex activity. CDK4 activity is either inhibited or enhanced depending on stoichiometry of complex. The non-tyrosine-phosphorylated form of CDKN1B prevents T-loop phosphorylation of CDK4 producing inactive CDK4. Interacts (unphosphorylated form) with CDK2. Also forms ternary complexes with CDKN1A or CDKN2A. Interacts directly with CDKN1A (via its N-terminal); the interaction promotes the assembly of the cyclin D-CDK4 complex, its nuclear translocation and promotes the cyclin D-dependent enzyme activity of CDK4. Interacts with CCND1; the interaction is prevented with the binding of CCND1 to INSM1 during cell cycle progression. Probably forms a complex composed of chaperones HSP90 and HSP70, co-chaperones CDC37, PPP5C, TSC1 and client protein TSC2, CDK4, AKT, RAF1 and NR3C1; this complex does not contain co-chaperones STIP1/HOP and PTGES3/p23. Interacts with CEBPA (when phosphorylated). Interacts with FNIP1 and FNIP2. Phosphorylation at Thr-172 is required for enzymatic activity. Phosphorylated, in vitro, at this site by CCNH-CDK7, but, in vivo, appears to be phosphorylated by a proline-directed kinase. In the cyclin D-CDK4-CDKN1B complex, this phosphorylation and consequent CDK4 enzyme activity, is dependent on the tyrosine phosphorylation state of CDKN1B. Thus, in proliferating cells, CDK4 within the complex is phosphorylated on Thr-172 in the T-loop. In resting cells, phosphorylation on Thr-172 is prevented by the non-tyrosine-phosphorylated form of CDKN1B.

It is found in the cytoplasm. The protein resides in the nucleus. Its subcellular location is the nucleus membrane. It carries out the reaction L-seryl-[protein] + ATP = O-phospho-L-seryl-[protein] + ADP + H(+). It catalyses the reaction L-threonyl-[protein] + ATP = O-phospho-L-threonyl-[protein] + ADP + H(+). With respect to regulation, both phosphorylation at Thr-172 and binding of a D-type cyclin are necessary for enzymatic activity. Full activation of the cyclin-D-CDK4 complex appears to require other factors such as recruitment of the substrate via a substrate recruitment motif, and/or formation of the CDKN1B ternary complex. Inhibited by INK4 family members. In resting cells, the non-tyrosine-phosphorylated form of CDKN1B prevents phosphorylation at Thr-172 and inactivation, while, in proliferating cells, tyrosine phosphorylation of CDKN1B allows phosphorylation of Thr-172 of CDK4 and subsequent activation. Functionally, ser/Thr-kinase component of cyclin D-CDK4 (DC) complexes that phosphorylate and inhibit members of the retinoblastoma (RB) protein family including RB1 and regulate the cell-cycle during G(1)/S transition. Phosphorylation of RB1 allows dissociation of the transcription factor E2F from the RB/E2F complexes and the subsequent transcription of E2F target genes which are responsible for the progression through the G(1) phase. Hypophosphorylates RB1 in early G(1) phase. Cyclin D-CDK4 complexes are major integrators of various mitogenenic and antimitogenic signals. Also phosphorylates SMAD3 in a cell-cycle-dependent manner and represses its transcriptional activity. Component of the ternary complex, cyclin D/CDK4/CDKN1B, required for nuclear translocation and activity of the cyclin D-CDK4 complex. This chain is Cyclin-dependent kinase 4 (CDK4), found in Bos taurus (Bovine).